Consider the following 201-residue polypeptide: ADP-ribosylation factor-like protein 4D (201 aa).

Gly-2 carries N-myristoyl glycine lipidation. GTP is bound by residues 28 to 35 (GLDSAGKT), 76 to 80 (DVGGQ), and 135 to 138 (NKQD).

This sequence belongs to the small GTPase superfamily. Arf family. In terms of assembly, interacts with CYTH2; the interaction is direct and ARL4D GTP-dependent. Does not interact with ARL4D.

Its subcellular location is the nucleus. It localises to the nucleolus. It is found in the cell membrane. The protein resides in the cytoplasm. Small GTP-binding protein which cycles between an inactive GDP-bound and an active GTP-bound form, and the rate of cycling is regulated by guanine nucleotide exchange factors (GEF) and GTPase-activating proteins (GAP). GTP-binding protein that does not act as an allosteric activator of the cholera toxin catalytic subunit. Recruits CYTH1, CYTH2, CYTH3 and CYTH4 to the plasma membrane in GDP-bound form. In Mus musculus (Mouse), this protein is ADP-ribosylation factor-like protein 4D (Arl4d).